Reading from the N-terminus, the 44-residue chain is Photosystem II reaction center protein J (44 aa).

The chain crosses the membrane as a helical span at residues 12–32 (IPLWIVGFVVGSLALGLLGIL).

It belongs to the PsbJ family. PSII is composed of 1 copy each of membrane proteins PsbA, PsbB, PsbC, PsbD, PsbE, PsbF, PsbH, PsbI, PsbJ, PsbK, PsbL, PsbM, PsbT, PsbY, PsbZ, Psb30/Ycf12, at least 3 peripheral proteins of the oxygen-evolving complex and a large number of cofactors. It forms dimeric complexes.

The protein resides in the plastid. Its subcellular location is the chloroplast thylakoid membrane. One of the components of the core complex of photosystem II (PSII). PSII is a light-driven water:plastoquinone oxidoreductase that uses light energy to abstract electrons from H(2)O, generating O(2) and a proton gradient subsequently used for ATP formation. It consists of a core antenna complex that captures photons, and an electron transfer chain that converts photonic excitation into a charge separation. This chain is Photosystem II reaction center protein J, found in Bigelowiella natans (Pedinomonas minutissima).